The chain runs to 272 residues: Putative pyruvate, phosphate dikinase regulatory protein (272 aa).

151–158 (GISRTSKT) serves as a coordination point for ADP.

Belongs to the pyruvate, phosphate/water dikinase regulatory protein family. PDRP subfamily.

It carries out the reaction N(tele)-phospho-L-histidyl/L-threonyl-[pyruvate, phosphate dikinase] + ADP = N(tele)-phospho-L-histidyl/O-phospho-L-threonyl-[pyruvate, phosphate dikinase] + AMP + H(+). The enzyme catalyses N(tele)-phospho-L-histidyl/O-phospho-L-threonyl-[pyruvate, phosphate dikinase] + phosphate + H(+) = N(tele)-phospho-L-histidyl/L-threonyl-[pyruvate, phosphate dikinase] + diphosphate. Functionally, bifunctional serine/threonine kinase and phosphorylase involved in the regulation of the pyruvate, phosphate dikinase (PPDK) by catalyzing its phosphorylation/dephosphorylation. This chain is Putative pyruvate, phosphate dikinase regulatory protein, found in Staphylococcus aureus (strain Mu3 / ATCC 700698).